We begin with the raw amino-acid sequence, 95 residues long: CRISPR-associated endoribonuclease Cas2 (95 aa).

Residue Asp9 participates in Mg(2+) binding.

Belongs to the CRISPR-associated endoribonuclease Cas2 protein family. In terms of assembly, homodimer, forms a heterotetramer with a Cas1 homodimer. It depends on Mg(2+) as a cofactor.

CRISPR (clustered regularly interspaced short palindromic repeat), is an adaptive immune system that provides protection against mobile genetic elements (viruses, transposable elements and conjugative plasmids). CRISPR clusters contain sequences complementary to antecedent mobile elements and target invading nucleic acids. CRISPR clusters are transcribed and processed into CRISPR RNA (crRNA). Functions as a ssRNA-specific endoribonuclease. Involved in the integration of spacer DNA into the CRISPR cassette. This Methylorubrum extorquens (strain CM4 / NCIMB 13688) (Methylobacterium extorquens) protein is CRISPR-associated endoribonuclease Cas2.